The following is a 553-amino-acid chain: MSEGDAYEDFMMSEDEEMHYAEMEEDSDEMGVYEEETSQGAEEEVPLDPSSSIVEGRYYRAKGLKENSKFREAIEALEGVATSSEPLWAFRALKQIAKCWNFKGAQASEGYQDGVRTALVRLLEHGLRWRQKLGAAYVERSLISTLRMLVPANSQNFVFDEAHEICLPTIEFHLRLLDAVAPLPGDFKDLCTLHMQLRLENLIWRERLRGADCTAILSEAPAPQLTAETLLLLLQCHICRFLRLCQPPAQQFAELVSELQDRAERSLALAQQPHAMVLLAFAQCMRGMQQQPQPHSALRTHFSACLQGLEEIGSNSSFFRDLNLCGFVLADALAYSAGRCSHRVDPFALEQIRILRETPIVHNLQLLYESYVALDLPSFARALDLLAPFRSALAPLFARLCALARERKLWDAIAPLHSCIALADIQRLLCIGSSSLSRDSLLTLMMQGVMASSARVPFRLDLTRDYVYFGDEPRVQLRAPAARPGLRHCAHDLGLTSACARPFQGSSALQLMDCLSEHRNRAASAAADPADAVCRARQPLAAYRTLAALILDE.

Residues 21-46 (AEMEEDSDEMGVYEEETSQGAEEEVP) are compositionally biased toward acidic residues. The segment at 21 to 47 (AEMEEDSDEMGVYEEETSQGAEEEVPL) is disordered. The PCI domain occupies 298-474 (LRTHFSACLQ…DYVYFGDEPR (177 aa)).

In terms of assembly, component of a COP9 signalosome-like (CSN) complex.

The protein localises to the cytoplasm. Its subcellular location is the nucleus. Functionally, component of the COP9 signalosome (CSN) complex that acts as an regulator of the ubiquitin (Ubl) conjugation pathway by mediating the deneddylation of the cullin subunit of SCF-type E3 ubiquitin-protein ligase complexes. The CSN complex is involved in the regulation of the mating pheromone response. This is COP9 signalosome complex subunit 10 (RRI2) from Eremothecium gossypii (strain ATCC 10895 / CBS 109.51 / FGSC 9923 / NRRL Y-1056) (Yeast).